The following is a 295-amino-acid chain: MSWLSKLMPSGIRTENTPAKKRSVPEGLWEKCSNCGSALYGPELEENLEVCPKCDHHMAIRARARLAALFDVDSPPTEIAAQLGPVDVLKFKDQKKYGERIKASQKSSGEYDALIAMRGMLKGNPLVAAAFDFAFMGGSMGSVVGERFARAAEVALEVGCPFVCFSASGGARMQEGLFSLMQMAKTSAALGRLREAGLPYISVLTHPTTGGVSASFAMLGDINIAEPHALIGFAGPRVIEQTVRETLPEGFQRSEFLLDHGAIDQICDRRDMRDRIAELTTMMMRQPHPQDADAA.

Residues 1-20 (MSWLSKLMPSGIRTENTPAK) are disordered. One can recognise a CoA carboxyltransferase N-terminal domain in the interval 28-295 (LWEKCSNCGS…QPHPQDADAA (268 aa)). 4 residues coordinate Zn(2+): Cys32, Cys35, Cys51, and Cys54. Residues 32-54 (CSNCGSALYGPELEENLEVCPKC) form a C4-type zinc finger.

The protein belongs to the AccD/PCCB family. Acetyl-CoA carboxylase is a heterohexamer composed of biotin carboxyl carrier protein (AccB), biotin carboxylase (AccC) and two subunits each of ACCase subunit alpha (AccA) and ACCase subunit beta (AccD). Requires Zn(2+) as cofactor.

Its subcellular location is the cytoplasm. It carries out the reaction N(6)-carboxybiotinyl-L-lysyl-[protein] + acetyl-CoA = N(6)-biotinyl-L-lysyl-[protein] + malonyl-CoA. The protein operates within lipid metabolism; malonyl-CoA biosynthesis; malonyl-CoA from acetyl-CoA: step 1/1. Component of the acetyl coenzyme A carboxylase (ACC) complex. Biotin carboxylase (BC) catalyzes the carboxylation of biotin on its carrier protein (BCCP) and then the CO(2) group is transferred by the transcarboxylase to acetyl-CoA to form malonyl-CoA. In Xanthomonas campestris pv. campestris (strain B100), this protein is Acetyl-coenzyme A carboxylase carboxyl transferase subunit beta.